Consider the following 247-residue polypeptide: PF03932 family protein CutC (247 aa).

This sequence belongs to the CutC family.

It localises to the cytoplasm. This Vibrio campbellii (strain ATCC BAA-1116) protein is PF03932 family protein CutC.